Here is a 159-residue protein sequence, read N- to C-terminus: Phospholipase A2 AP-PLA2-I (159 aa).

The signal sequence occupies residues 1-19 (MNFLVVIVTTVSLAGAASA). Residues 20–23 (GEIQ) constitute a propeptide that is removed on maturation. 6 cysteine pairs are disulfide-bonded: C51–C159, C53–C69, C68–C139, C75–C132, C85–C125, and C110–C130. Ca(2+) is bound by residues Y52, G54, and G56. Residue H72 is part of the active site. Ca(2+) is bound at residue D73. Residue D133 is part of the active site.

The protein belongs to the phospholipase A2 family. Group I subfamily. Homodimer. Ca(2+) serves as cofactor. Expressed by the venom gland.

The protein resides in the secreted. The catalysed reaction is a 1,2-diacyl-sn-glycero-3-phosphocholine + H2O = a 1-acyl-sn-glycero-3-phosphocholine + a fatty acid + H(+). Its function is as follows. Starfish phospholipase A2 (PLA2) that has hemorrhagic and capillary permeability-increasing activities and hence is considered to be deeply involved in the local inflammation. Shows hemolytic activity only in the presence of phosphatidylcholine (PC). PLA2 catalyzes the calcium-dependent hydrolysis of the 2-acyl groups in 3-sn-phosphoglycerides. This Acanthaster planci (Crown-of-thorns starfish) protein is Phospholipase A2 AP-PLA2-I.